The primary structure comprises 258 residues: MDNSLLSEIWRQSLAFPWLSAVILNSFLLALAAIAPKKLLTPWGYGHAWVLGVIIWAALGWRGYLVVLAYFFVGSAVTRIGQKEKEAAGIAEKRSGQRGPENVWGSALTAALCALAIAFGPEPWQLWLALGYVASFSTKLSDTTASEVGKAYGKNTFLITTLQPVPRGTEGAVSVEGTLAGFAAGLALAVLGYGVGLISFGGIIFSTLAAFIATNLESVIGATLQNKWPWLTNEVVNGINTFLGAAIAIGIEATAQLI.

The next 5 membrane-spanning stretches (helical) occupy residues 14–34 (LAFPWLSAVILNSFLLALAAI), 53–73 (VIIWAALGWRGYLVVLAYFFV), 110–130 (AALCALAIAFGPEPWQLWLAL), 185–205 (GLALAVLGYGVGLISFGGIIF), and 238–258 (GINTFLGAAIAIGIEATAQLI).

The protein belongs to the TMEM19 family.

It is found in the cell membrane. This is an uncharacterized protein from Synechocystis sp. (strain ATCC 27184 / PCC 6803 / Kazusa).